Reading from the N-terminus, the 87-residue chain is Putative defensin-like protein 84 (87 aa).

A signal peptide spans 1–27 (MTTKMVSSHRLLTLMVFALLLIPMISG). 4 disulfides stabilise this stretch: Cys-32–Cys-73, Cys-36–Cys-54, Cys-42–Cys-71, and Cys-46–Cys-72.

It belongs to the DEFL family.

The protein resides in the secreted. This chain is Putative defensin-like protein 84, found in Arabidopsis thaliana (Mouse-ear cress).